Here is a 363-residue protein sequence, read N- to C-terminus: Protein Wnt-5 (363 aa).

An N-terminal signal peptide occupies residues 1 to 27 (MVGMTRIQSAEPVWILFVLTLYSSVLM). 2 N-linked (GlcNAc...) asparagine glycosylation sites follow: Asn-48 and Asn-98. Disulfide bonds link Cys-88-Cys-99, Cys-137-Cys-145, Cys-147-Cys-165, Cys-221-Cys-235, Cys-223-Cys-230, Cys-292-Cys-323, Cys-308-Cys-318, Cys-322-Cys-362, Cys-338-Cys-353, Cys-340-Cys-350, and Cys-345-Cys-346. A lipid anchor (O-palmitoleoyl serine; by PORCN) is attached at Ser-227.

This sequence belongs to the Wnt family. In terms of processing, palmitoleoylation is required for efficient binding to frizzled receptors. Depalmitoleoylation leads to Wnt signaling pathway inhibition.

The protein localises to the secreted. The protein resides in the extracellular space. It localises to the extracellular matrix. In terms of biological role, ligand for members of the frizzled family of seven transmembrane receptors. Probable developmental protein. May be a signaling molecule which affects the development of discrete regions of tissues. Is likely to signal over only few cell diameters. The chain is Protein Wnt-5 (WNT5) from Halocynthia roretzi (Sea squirt).